The following is a 429-amino-acid chain: MAEETMENEERVKLFVGQVPKHMTEIQLLTLFREFSIVNEVNIIKEKTTRAPRGCCFLTCPTREDADKVINSFHNKKTLPGASSPLQVKYADGELERLEHKLFVGMLPKNVSETEVQSLFSEYGTIKDLQILRGSLQTSKGCLFLKYESKEQAVAAMEALNGRHIMEGANVPLIVKWADTEKERQARRLLKVQSHVSRLDPQNPSMFGALPMSYVPPYNGYGYHVPGTYGYMLPPIQTQHAFHNVISPNQGNGRALQGTALTESVPPRLAPRRNFPTALGNYGYHGLQYPMAFPRGMIPPRLPLTTVSPGISNNGTSIPSSLQTEGPAGANLFIYNIPREFEDQELAATFQPFGKVLSAKVFVDKATGISKCFGFISYDSQAAAQNAINTMNGCQLSGKKLKVQLKRDNGQQQQQQQSKNPLFNGLLNS.

3 RRM domains span residues V12 to G93, H100 to T180, and A330 to D408. Residues G410 to S429 are disordered. Residues S418–S429 show a composition bias toward polar residues.

Expressed in roots, stems, flowers and siliques.

The protein resides in the cytoplasm. Functionally, RNA-binding protein involved in the regulation of flowering time. Acts as a repressor of the activity of SOC1, a transcriptional activator of flowering time. Binds to the 3'-UTR of SOC1 mRNA in the cytoplasm and participates in SOC1 mRNA decay, mediated by the distal region of the SOC1 3'-UTR. The protein is RNA-binding protein BRN2 of Arabidopsis thaliana (Mouse-ear cress).